Here is a 40-residue protein sequence, read N- to C-terminus: Photosystem II reaction center protein J (40 aa).

The chain crosses the membrane as a helical span at residues 8–28; that stretch reads IPLWIIGTVAGILVIGLIGIF.

It belongs to the PsbJ family. As to quaternary structure, PSII is composed of 1 copy each of membrane proteins PsbA, PsbB, PsbC, PsbD, PsbE, PsbF, PsbH, PsbI, PsbJ, PsbK, PsbL, PsbM, PsbT, PsbX, PsbY, PsbZ, Psb30/Ycf12, at least 3 peripheral proteins of the oxygen-evolving complex and a large number of cofactors. It forms dimeric complexes.

It is found in the plastid. The protein localises to the chloroplast thylakoid membrane. Functionally, one of the components of the core complex of photosystem II (PSII). PSII is a light-driven water:plastoquinone oxidoreductase that uses light energy to abstract electrons from H(2)O, generating O(2) and a proton gradient subsequently used for ATP formation. It consists of a core antenna complex that captures photons, and an electron transfer chain that converts photonic excitation into a charge separation. This Oenothera elata subsp. hookeri (Hooker's evening primrose) protein is Photosystem II reaction center protein J.